The chain runs to 251 residues: Orotidine 5'-phosphate decarboxylase (251 aa).

Substrate-binding positions include D19, K42, 69–78 (DLKFHDIPNT), T133, R194, Q204, G224, and R225. Catalysis depends on K71, which acts as the Proton donor.

This sequence belongs to the OMP decarboxylase family. Type 1 subfamily. Homodimer.

It carries out the reaction orotidine 5'-phosphate + H(+) = UMP + CO2. Its pathway is pyrimidine metabolism; UMP biosynthesis via de novo pathway; UMP from orotate: step 2/2. Catalyzes the decarboxylation of orotidine 5'-monophosphate (OMP) to uridine 5'-monophosphate (UMP). This is Orotidine 5'-phosphate decarboxylase from Syntrophus aciditrophicus (strain SB).